Here is a 488-residue protein sequence, read N- to C-terminus: (S)-canadine synthase CYP719A21 (488 aa).

A helical membrane pass occupies residues 6–26; that stretch reads LWILTLISTILAVFAAVLIIF. Residue Cys432 coordinates heme.

This sequence belongs to the cytochrome P450 family. Heme serves as cofactor.

Its subcellular location is the membrane. The enzyme catalyses (S)-tetrahydrocolumbamine + reduced [NADPH--hemoprotein reductase] + O2 = (S)-canadine + oxidized [NADPH--hemoprotein reductase] + 2 H2O + H(+). It functions in the pathway alkaloid biosynthesis. Its function is as follows. Cytochrome P450 involved in the biosynthesis of the benzylisoquinoline alkaloid noscapine. Converts (S)-tetrahydrocolumbamine to (S)-canadine. This is (S)-canadine synthase CYP719A21 from Papaver somniferum (Opium poppy).